Consider the following 1128-residue polypeptide: DNA-directed RNA polymerase subunit Rpo2 (1128 aa).

DsDNA is bound by residues lysine 178, 181–182 (SN), lysine 206, 435–439 (RGQPN), and 1027–1032 (RFGEME). Zn(2+) contacts are provided by cysteine 1061, cysteine 1064, cysteine 1079, and histidine 1082.

The protein belongs to the RNA polymerase beta chain family. Part of the 13-subunit RNA polymerase complex. Zn(2+) is required as a cofactor.

Its subcellular location is the cytoplasm. It carries out the reaction RNA(n) + a ribonucleoside 5'-triphosphate = RNA(n+1) + diphosphate. Its function is as follows. DNA-dependent RNA polymerase (RNAP) catalyzes the transcription of DNA into RNA using the four ribonucleoside triphosphates as substrates. This subunit is involved in DNA promoter recognition. This is DNA-directed RNA polymerase subunit Rpo2 from Saccharolobus shibatae (strain ATCC 51178 / DSM 5389 / JCM 8931 / NBRC 15437 / B12) (Sulfolobus shibatae).